Reading from the N-terminus, the 136-residue chain is Histone H3 (136 aa).

The disordered stretch occupies residues 1-43 (MARTKQTARKSTGGKAPRKQLATKAARKSAPASGGVKKPHRFR). Lysine 5 carries the N6-methylated lysine modification. The residue at position 10 (lysine 10) is an N6-acetyllysine; alternate. Lysine 10 is subject to N6-methylated lysine; alternate. The residue at position 11 (serine 11) is a Phosphoserine. Position 12 is a phosphothreonine (threonine 12). Lysine 15 is subject to N6-acetyllysine. N6-acetyllysine; alternate is present on residues lysine 19 and lysine 24. N6-methylated lysine; alternate is present on residues lysine 19 and lysine 24. Lysine 28 is subject to N6-methylated lysine. Serine 29 carries the phosphoserine modification. N6-methylated lysine is present on lysine 37.

It belongs to the histone H3 family. As to quaternary structure, the nucleosome is a histone octamer containing two molecules each of H2A, H2B, H3 and H4 assembled in one H3-H4 heterotetramer and two H2A-H2B heterodimers. The octamer wraps approximately 147 bp of DNA. Acetylation is generally linked to gene activation. Can be acetylated to form H3K9ac, H3K14ac, H3K18ac and H3K23ac. H3K9ac could compete with H3K9me and prevent gene silencing. H3K9ac is restricted to euchromatin. In terms of processing, methylated to form mainly H3K4me, H3K9me, H3K18me, H3K23me, H3K27me and H3K36me. H3K4me1/2/3, H3K9me3, H3K27me3 and H3K36me1/2/3 are typical marks for euchromatin, whereas heterochromatic chromocenters are enriched in H3K9me1/2 and H3K27me1/2. H2BK143ub1 is probably prerequisite for H3K4me. Post-translationally, can be phosphorylated to form H3S10ph, H3T11ph and H3S28ph.

Its subcellular location is the nucleus. The protein localises to the chromosome. Its function is as follows. Core component of nucleosome. Nucleosomes wrap and compact DNA into chromatin, limiting DNA accessibility to the cellular machineries which require DNA as a template. Histones thereby play a central role in transcription regulation, DNA repair, DNA replication and chromosomal stability. DNA accessibility is regulated via a complex set of post-translational modifications of histones, also called histone code, and nucleosome remodeling. This chain is Histone H3, found in Griffithsia japonica (Red alga).